Reading from the N-terminus, the 578-residue chain is Nuclear receptor subfamily 1 group D member 2 (578 aa).

Residues 1–60 (MELNAGGVIAYISSSSSASSPASCHSEGSENSFQSSSSSVPSSPNSSNCDANGNPKNTDV) form a required for phosphorylation by CSNK1E and cytoplasmic localization region. The modulating stretch occupies residues 1–99 (MELNAGGVIA…HSGMTKFSGM (99 aa)). The span at 13-47 (SSSSSASSPASCHSEGSENSFQSSSSSVPSSPNSS) shows a compositional bias: low complexity. The interval 13–89 (SSSSSASSPA…KPGAPGMTKS (77 aa)) is disordered. Phosphoserine; by GSK3-beta is present on Ser-46. Residues 48–61 (NCDANGNPKNTDVS) are compositionally biased toward polar residues. The segment at residues 100–176 (VLLCKVCGDV…VGMSRDAVRF (77 aa)) is a DNA-binding region (nuclear receptor). 2 consecutive NR C4-type zinc fingers follow at residues 103–123 (CKVCGDVASGFHYGVHACEGC) and 140–164 (CLKNENCSIMRMNRNRCQQCRFKKC). N6-acetyllysine; by KAT5 is present on residues Lys-162 and Lys-163. Residues 214–247 (EPHEQSVPPAQEQLRPKPQLEQENIKSTPPPSDF) form a disordered region. A compositionally biased stretch (basic and acidic residues) spans 227 to 237 (LRPKPQLEQEN). Intrachain disulfides connect Cys-336–Cys-342 and Cys-373–Cys-383. In terms of domain architecture, NR LBD spans 368–578 (RNSYLCSTGG…EELLAFKVHP (211 aa)). Positions 383 and 567 each coordinate heme. Residues 396–578 (SGHEIWEEFS…EELLAFKVHP (183 aa)) form an interaction with ZNHIT1 region.

This sequence belongs to the nuclear hormone receptor family. NR1 subfamily. Binds DNA as a monomer or a homodimer. Interacts with NCOA5 coactivator, leading to a strong increase of transcription of target genes. Interacts (via N-terminus) with KAT5. Interacts (via C-terminus) with HDAC1. Interacts with ZNHIT1. Interacts with SIAH2. In terms of processing, deacetylated by HDAC1. Acetylation and deacetylation regulate its transcriptional regulatory activity. Post-translationally, under more reducing intracellular redox conditions, Cys-383 is in its heme-bound state, which is optimal for recruitment of the NCOR1/HDAC3 corepressor complex and repression of target genes. When subjected to oxidative stress conditions, Cys-383 undergoes oxidation to form a disulfide bridge with Cys-373, also triggering a ligand switch that results in release of bound heme and derepression of target genes. Ubiquitinated by SIAH2; leading to its proteasomal degradation. In terms of processing, phosphorylated by CSNK1E; phosphorylation enhances its cytoplasmic localization.

It localises to the nucleus. The protein localises to the cytoplasm. The heme-bound form can bind gaseous signaling molecules such as CO and nitric oxide (NO) and NO can reverse its transcriptional repressor activity. Transcriptional repressor which coordinates circadian rhythm and metabolic pathways in a heme-dependent manner. Integral component of the complex transcription machinery that governs circadian rhythmicity and forms a critical negative limb of the circadian clock by directly repressing the expression of core clock components BMAL1 and CLOCK. Also regulates genes involved in metabolic functions, including lipid metabolism and the inflammatory response. Acts as a receptor for heme which stimulates its interaction with the NCOR1/HDAC3 corepressor complex, enhancing transcriptional repression. Recognizes two classes of DNA response elements within the promoter of its target genes and can bind to DNA as either monomers or homodimers, depending on the nature of the response element. Binds as a monomer to a response element composed of the consensus half-site motif 5'-[A/G]GGTCA-3' preceded by an A/T-rich 5' sequence (RevRE), or as a homodimer to a direct repeat of the core motif spaced by two nuclegotides (RevDR-2). Acts as a potent competitive repressor of ROR alpha (RORA) function and also negatively regulates the expression of NR1D1. Regulates lipid and energy homeostasis in the skeletal muscle via repression of genes involved in lipid metabolism and myogenesis including: CD36, FABP3, FABP4, UCP3, SCD1 and MSTN. Regulates hepatic lipid metabolism via the repression of APOC3. Represses gene expression at a distance in macrophages by inhibiting the transcription of enhancer-derived RNAs (eRNAs). In addition to its activity as a repressor, can also act as a transcriptional activator. Acts as a transcriptional activator of the sterol regulatory element-binding protein 1 (SREBF1) and the inflammatory mediator interleukin-6 (IL6) in the skeletal muscle. Plays a role in the regulation of circadian sleep/wake cycle; essential for maintaining wakefulness during the dark phase or active period. Key regulator of skeletal muscle mitochondrial function; negatively regulates the skeletal muscle expression of core clock genes and genes involved in mitochondrial biogenesis, fatty acid beta-oxidation and lipid metabolism. May play a role in the circadian control of neutrophilic inflammation in the lung. This chain is Nuclear receptor subfamily 1 group D member 2, found in Rattus norvegicus (Rat).